The chain runs to 731 residues: Alpha-xylosidase (731 aa).

Catalysis depends on residues Asp-353 and Glu-356. The Proton donor role is filled by Asp-428.

Belongs to the glycosyl hydrolase 31 family. In terms of assembly, monomer.

It carries out the reaction Hydrolysis of terminal, non-reducing alpha-D-xylose residues with release of alpha-D-xylose.. Catalyzes the liberation of alpha-xylose from the non-reducing terminal glucose of xyloglucan oligosaccharides. Has high hydrolytic activity on the disaccharide isoprimeverose. Follows a retaining mechanism of substrate hydrolysis. This Saccharolobus solfataricus (strain ATCC 35092 / DSM 1617 / JCM 11322 / P2) (Sulfolobus solfataricus) protein is Alpha-xylosidase (xylS).